The chain runs to 298 residues: Dihydrodipicolinate reductase-like protein CRR1, chloroplastic (298 aa).

A chloroplast-targeting transit peptide spans 1-25; the sequence is MAAVNCHFFQLSRHLKPSRPSFSCS. 160–163 contributes to the NAD(+) binding site; that stretch reads APTL.

Belongs to the DapB family. As to expression, expressed specifically in leaves.

It is found in the plastid. It localises to the chloroplast stroma. Functionally, dihydrodipicolinate reductase (DHPR)-like protein that may not function as DHPR in lysine biosynthesis. Required for both formation and activity of the chloroplast NAD(P)H dehydrogenase (NDH) complex of the photosynthetic electron transport chain. May function in assembly or stabilization of the NDH complex. The polypeptide is Dihydrodipicolinate reductase-like protein CRR1, chloroplastic (Arabidopsis thaliana (Mouse-ear cress)).